The chain runs to 545 residues: Glucose-6-phosphate isomerase (545 aa).

The active-site Proton donor is Glu-351. Active-site residues include His-382 and Lys-510.

The protein belongs to the GPI family.

Its subcellular location is the cytoplasm. The enzyme catalyses alpha-D-glucose 6-phosphate = beta-D-fructose 6-phosphate. It participates in carbohydrate biosynthesis; gluconeogenesis. It functions in the pathway carbohydrate degradation; glycolysis; D-glyceraldehyde 3-phosphate and glycerone phosphate from D-glucose: step 2/4. Its function is as follows. Catalyzes the reversible isomerization of glucose-6-phosphate to fructose-6-phosphate. The polypeptide is Glucose-6-phosphate isomerase (Helicobacter pylori (strain J99 / ATCC 700824) (Campylobacter pylori J99)).